Reading from the N-terminus, the 335-residue chain is MRSAKKLLSVLCLGVFILTFTACDMVEKTPEAKAKSTIAKVNGEKIQRKDLDENPRFKQVVSQMKMQYGEEFEKSEQGKEVIKEQKSQILDELITEKVLLQKGKELKVIPKDEELNKEADKKVNEIKAVYNNDEKKFEETLKSTGFTKETLKEYLKDQIVIEKVINEATKGVKVEDKDAQKYYNENQSMFTEKPNTMNVSHILVKTEDEAKKVKKRLDAKEDFAKVAKEVSQDGSKDKGGLLGDISYSDSNLDPTFLKAAIALKEGAISNPVHTQFGYHIIKINSKKEYPVKKFDAVKEDIKKQLKQEKQQEAYTKKIEEWKKASKIKIYEKNLL.

The first 22 residues, 1 to 22, serve as a signal peptide directing secretion; the sequence is MRSAKKLLSVLCLGVFILTFTA. Cysteine 23 is lipidated: N-palmitoyl cysteine. Cysteine 23 is lipidated: S-diacylglycerol cysteine. Positions 194–285 constitute a PpiC domain; it reads PNTMNVSHIL…FGYHIIKINS (92 aa).

It belongs to the PrsA family.

It localises to the cell membrane. It carries out the reaction [protein]-peptidylproline (omega=180) = [protein]-peptidylproline (omega=0). Plays a major role in protein secretion by helping the post-translocational extracellular folding of several secreted proteins. The chain is Foldase protein PrsA from Clostridium botulinum (strain Loch Maree / Type A3).